Consider the following 454-residue polypeptide: Notoamide biosynthesis cluster protein M' (454 aa).

2 N-linked (GlcNAc...) asparagine glycosylation sites follow: Asn-51 and Asn-74. Residues 205–219 (KARSKEKKPKRKKSK) are compositionally biased toward basic residues. The tract at residues 205–224 (KARSKEKKPKRKKSKAEKEH) is disordered. 2 helical membrane passes run 334–354 (MTTV…SGLF) and 375–395 (FWMY…VWGV).

The protein localises to the membrane. Functionally, part of the gene cluster that mediates the biosynthesis of notoamide, a fungal indole alkaloid that belongs to a family of natural products containing a characteristic bicyclo[2.2.2]diazaoctane core. The first step of notoamide biosynthesis involves coupling of L-proline and L-tryptophan by the bimodular NRPS notE', to produce cyclo-L-tryptophan-L-proline called brevianamide F. The reverse prenyltransferase notF' then acts as a deoxybrevianamide E synthase and converts brevianamide F to deoxybrevianamide E via reverse prenylation at C-2 of the indole ring leading to the bicyclo[2.2.2]diazaoctane core. Deoxybrevianamide E is further hydroxylated at C-6 of the indole ring, likely catalyzed by the cytochrome P450 monooxygenase notG', to yield 6-hydroxy-deoxybrevianamide E. 6-hydroxy-deoxybrevianamide E is a specific substrate of the prenyltransferase notC' for normal prenylation at C-7 to produce 6-hydroxy-7-prenyl-deoxybrevianamide, also called notoamide S. As the proposed pivotal branching point in notoamide biosynthesis, notoamide S can be diverted to notoamide E through an oxidative pyran ring closure putatively catalyzed by either notH' cytochrome P450 monooxygenase or the notD' FAD-linked oxidoreductase. This step would be followed by an indole 2,3-epoxidation-initiated pinacol-like rearrangement catalyzed by the notB' FAD-dependent monooxygenase leading to the formation of notoamide C and notoamide D. On the other hand notoamide S is converted to notoamide T by notH' (or notD'), a bifunctional oxidase that also functions as the intramolecular Diels-Alderase responsible for generation of (-)-notoamide T. To generate antipodal (+)-notoaminide T, notH (or notD) in Aspergillus strain MF297-2 is expected to catalyze a Diels-Alder reaction leading to the opposite stereochemistry. The remaining oxidoreductase notD' (or notH') likely catalyzes the oxidative pyran ring formation to yield (-)-stephacidin A. The FAD-dependent monooxygenase notI' is highly similar to notB' and is predicted to catalyze a similar conversion from (-)-stephacidin A to (+)-notoamide B via the 2,3-epoxidation of (-)-stephacidin A followed by a pinacol-type rearrangement. Finally, it remains unclear which enzyme could be responsible for the final hydroxylation steps leading to notoamide A and sclerotiamide. The function of notM' in the notoamide biosynthesis has not been determined yet. The polypeptide is Notoamide biosynthesis cluster protein M' (Aspergillus versicolor).